We begin with the raw amino-acid sequence, 113 residues long: uncharacterized protein (113 aa).

Residues 1 to 14 (MATRNALRIVSRRF) constitute a mitochondrion transit peptide. Positions 41–79 (QKLARQGPGEQAAGSASEAKVAGATASASAESGPKVSED) are disordered. Residues 55 to 73 (SASEAKVAGATASASAESG) are compositionally biased toward low complexity.

Its subcellular location is the mitochondrion. This is an uncharacterized protein from Arabidopsis thaliana (Mouse-ear cress).